The primary structure comprises 330 residues: Tryptophan--tRNA ligase (330 aa).

ATP-binding positions include Gln9–Thr11 and Gly17–Asn18. Positions Pro10–Asn18 match the 'HIGH' region motif. Asp136 contacts L-tryptophan. ATP-binding positions include Gly148 to Asp150, Ile187, and Lys195 to Ser199. Positions Lys195–Ser199 match the 'KMSKS' region motif.

The protein belongs to the class-I aminoacyl-tRNA synthetase family. As to quaternary structure, homodimer.

The protein localises to the cytoplasm. The catalysed reaction is tRNA(Trp) + L-tryptophan + ATP = L-tryptophyl-tRNA(Trp) + AMP + diphosphate + H(+). Its function is as follows. Catalyzes the attachment of tryptophan to tRNA(Trp). The protein is Tryptophan--tRNA ligase of Deinococcus radiodurans (strain ATCC 13939 / DSM 20539 / JCM 16871 / CCUG 27074 / LMG 4051 / NBRC 15346 / NCIMB 9279 / VKM B-1422 / R1).